Here is a 1398-residue protein sequence, read N- to C-terminus: Protein timeless (1398 aa).

Residues 237 to 268 form a necessary for normal circadian rhythm region; the sequence is VSTLQKLLSLWFEASLSESSEDNESNTSPPKQ. 5 disordered regions span residues 254–300, 322–452, 478–555, 1127–1147, and 1220–1239; these read ESSE…GGMR, ARVP…QKFN, TKGK…LRRK, TASS…SSVS, and NHRT…SSTT. Over residues 273–290 the composition is skewed to low complexity; that stretch reads SSPMLTSDPTSDSSDNGS. Residues 291-300 are compositionally biased toward gly residues; the sequence is NGRGMGGGMR. Over residues 338–355 the composition is skewed to polar residues; that stretch reads MTGNDSEQPGSPEQSQPA. Basic and acidic residues predominate over residues 365 to 375; sequence EDQRHRQLNEH. The segment covering 376–390 has biased composition (acidic residues); sequence GEEDEDEDEVEEEEY. Polar residues-rich tracts occupy residues 400–421, 440–452, and 504–515; these read LNLT…SSAP, ASTS…QKFN, and QVENQESISTSS. Residues 522-531 are compositionally biased toward low complexity; that stretch reads QGKPQHQKPP. Positions 550–560 match the Nuclear localization signal motif; that stretch reads KELRRKKLVKR.

The protein belongs to the timeless family. In terms of assembly, forms a heterodimer with period (PER); the complex then translocates into the nucleus. In terms of processing, phosphorylated with a circadian rhythmicity. Expressed in head, photoreceptors, lateral neurons and glial cells in the lamina and medulla of the optic lobes. Expression follows a light-dark cycle, levels show a significant decrease at the end of the night and then remain low throughout the light period (at protein level).

It is found in the nucleus. The protein resides in the cytoplasm. It localises to the perinuclear region. Required for the production of circadian rhythms. The biological cycle depends on the rhythmic formation and nuclear localization of the TIM-PER complex. Light induces the degradation of TIM, which promotes elimination of PER. Nuclear activity of the heterodimer coordinatively regulates PER and TIM transcription through a negative feedback loop. Behaves as a negative element in circadian transcriptional loop. Does not appear to bind DNA, suggesting indirect transcriptional inhibition. The chain is Protein timeless (tim) from Drosophila melanogaster (Fruit fly).